A 172-amino-acid chain; its full sequence is Ferritin-2 heavy chain (172 aa).

The Ferritin-like diiron domain occupies 8 to 157; it reads QSFATECENA…DYLTETQRVG (150 aa). Fe cation contacts are provided by Glu-25, Glu-60, His-63, Glu-105, and Gln-139.

This sequence belongs to the ferritin family. Oligomer of 24 subunits. The functional molecule forms a roughly spherical shell with a diameter of 12 nm and contains a central cavity into which the insoluble mineral iron core is deposited.

It carries out the reaction 4 Fe(2+) + O2 + 4 H(+) = 4 Fe(3+) + 2 H2O. In terms of biological role, stores iron in a soluble, non-toxic, readily available form. Important for iron homeostasis. Has ferroxidase activity. Iron is taken up in the ferrous form and deposited as ferric hydroxides after oxidation. The chain is Ferritin-2 heavy chain (SCM-2) from Schistosoma mansoni (Blood fluke).